Consider the following 346-residue polypeptide: 3-dehydroquinate synthase (346 aa).

NAD(+)-binding positions include Asp-61–Lys-66, Gly-95–Asp-99, Thr-119–Thr-120, Lys-132, and Lys-141. Zn(2+) is bound by residues Glu-174, His-233, and His-250.

It belongs to the sugar phosphate cyclases superfamily. Dehydroquinate synthase family. It depends on NAD(+) as a cofactor. Requires Co(2+) as cofactor. Zn(2+) is required as a cofactor.

The protein localises to the cytoplasm. The catalysed reaction is 7-phospho-2-dehydro-3-deoxy-D-arabino-heptonate = 3-dehydroquinate + phosphate. It participates in metabolic intermediate biosynthesis; chorismate biosynthesis; chorismate from D-erythrose 4-phosphate and phosphoenolpyruvate: step 2/7. In terms of biological role, catalyzes the conversion of 3-deoxy-D-arabino-heptulosonate 7-phosphate (DAHP) to dehydroquinate (DHQ). This chain is 3-dehydroquinate synthase, found in Wolinella succinogenes (strain ATCC 29543 / DSM 1740 / CCUG 13145 / JCM 31913 / LMG 7466 / NCTC 11488 / FDC 602W) (Vibrio succinogenes).